A 255-amino-acid chain; its full sequence is 5-oxoprolinase subunit A (255 aa).

This sequence belongs to the LamB/PxpA family. In terms of assembly, forms a complex composed of PxpA, PxpB and PxpC.

The enzyme catalyses 5-oxo-L-proline + ATP + 2 H2O = L-glutamate + ADP + phosphate + H(+). Catalyzes the cleavage of 5-oxoproline to form L-glutamate coupled to the hydrolysis of ATP to ADP and inorganic phosphate. The polypeptide is 5-oxoprolinase subunit A (Nitrobacter hamburgensis (strain DSM 10229 / NCIMB 13809 / X14)).